A 192-amino-acid polypeptide reads, in one-letter code: Cytidylate kinase (192 aa).

7 to 15 (GPAGSGKST) contacts ATP.

Belongs to the cytidylate kinase family. Type 2 subfamily.

It is found in the cytoplasm. The enzyme catalyses CMP + ATP = CDP + ADP. It carries out the reaction dCMP + ATP = dCDP + ADP. The chain is Cytidylate kinase from Haloarcula marismortui (strain ATCC 43049 / DSM 3752 / JCM 8966 / VKM B-1809) (Halobacterium marismortui).